A 381-amino-acid chain; its full sequence is Succinyl-diaminopimelate desuccinylase (381 aa).

His68 lines the Zn(2+) pocket. Asp70 is an active-site residue. Asp101 contributes to the Zn(2+) binding site. Glu135 acts as the Proton acceptor in catalysis. Glu136, Glu164, and His350 together coordinate Zn(2+).

This sequence belongs to the peptidase M20A family. DapE subfamily. Homodimer. Zn(2+) serves as cofactor. Requires Co(2+) as cofactor.

It catalyses the reaction N-succinyl-(2S,6S)-2,6-diaminopimelate + H2O = (2S,6S)-2,6-diaminopimelate + succinate. It functions in the pathway amino-acid biosynthesis; L-lysine biosynthesis via DAP pathway; LL-2,6-diaminopimelate from (S)-tetrahydrodipicolinate (succinylase route): step 3/3. Its function is as follows. Catalyzes the hydrolysis of N-succinyl-L,L-diaminopimelic acid (SDAP), forming succinate and LL-2,6-diaminopimelate (DAP), an intermediate involved in the bacterial biosynthesis of lysine and meso-diaminopimelic acid, an essential component of bacterial cell walls. The polypeptide is Succinyl-diaminopimelate desuccinylase (Neisseria meningitidis serogroup C (strain 053442)).